Consider the following 399-residue polypeptide: S-adenosylmethionine synthase (399 aa).

H17 lines the ATP pocket. Mg(2+) is bound at residue D19. K(+) is bound at residue E45. The L-methionine site is built by E58 and Q101. The tract at residues 101-111 (QSADIAMGVDQ) is flexible loop. ATP is bound by residues 177–179 (DGK), 244–245 (RF), D253, 259–260 (RK), A276, and K280. D253 lines the L-methionine pocket. K284 contributes to the L-methionine binding site.

This sequence belongs to the AdoMet synthase family. In terms of assembly, homotetramer; dimer of dimers. It depends on Mg(2+) as a cofactor. K(+) is required as a cofactor.

It is found in the cytoplasm. The enzyme catalyses L-methionine + ATP + H2O = S-adenosyl-L-methionine + phosphate + diphosphate. Its pathway is amino-acid biosynthesis; S-adenosyl-L-methionine biosynthesis; S-adenosyl-L-methionine from L-methionine: step 1/1. Functionally, catalyzes the formation of S-adenosylmethionine (AdoMet) from methionine and ATP. The overall synthetic reaction is composed of two sequential steps, AdoMet formation and the subsequent tripolyphosphate hydrolysis which occurs prior to release of AdoMet from the enzyme. The polypeptide is S-adenosylmethionine synthase (Bacillus anthracis (strain A0248)).